Reading from the N-terminus, the 1048-residue chain is Dyslexia-associated protein KIAA0319-like protein (1048 aa).

The Cytoplasmic portion of the chain corresponds to 1 to 29 (MEKRLGVKPSPASWVLPGYCWQTSVKLPR). The chain crosses the membrane as a helical span at residues 30-50 (SLYLLYSFFCFSVLWLSTDAD). In terms of domain architecture, MANSC spans 49–127 (ADESRCQQGK…PFRTDSSNSM (79 aa)). The Extracellular portion of the chain corresponds to 51 to 928 (ESRCQQGKTL…RDGDSNCEWS (878 aa)). Disordered stretches follow at residues 198–218 (HGAM…LSPT) and 231–300 (SFTS…STSA). Residues 231 to 241 (SFTSNHTTQTP) show a composition bias toward polar residues. Asparagine 246 carries N-linked (GlcNAc...) asparagine glycosylation. Low complexity-rich tracts occupy residues 247 to 261 (VSIH…SPVS) and 287 to 300 (ATPT…STSA). PKD domains follow at residues 309–400 (VVSA…VKPE), 408–497 (VAVV…VNKA), 503–593 (VANA…VQPE), 599–687 (QADA…VKEE), and 693–784 (VAKI…VKPD). An N-linked (GlcNAc...) asparagine glycan is attached at asparagine 394. The tract at residues 593-623 (ENNKPPQADAGPDKELTLPVDSTTLDGSKST) is disordered. Residues 929-949 (VLYVIIASFVIVVALGILSWT) form a helical membrane-spanning segment. At 950 to 1048 (TICCCKRQKG…KSRSAREEIL (99 aa)) the chain is on the cytoplasmic side. Phosphothreonine is present on threonine 973. Phosphoserine is present on serine 977. A disordered region spans residues 980-1007 (LKPTSRAGSKQKGPTLSSSLMHSESELD). The span at 985–994 (RAGSKQKGPT) shows a compositional bias: polar residues. Phosphoserine is present on residues serine 1008 and serine 1030. The segment at 1024 to 1048 (LYGQNGSVPNGQTPLKSRSAREEIL) is disordered. Residues 1027 to 1039 (QNGSVPNGQTPLK) are compositionally biased toward polar residues. Threonine 1036 is subject to Phosphothreonine.

Interacts with RTN4R. N-glycosylated.

It localises to the cytoplasmic granule membrane. Its subcellular location is the golgi apparatus membrane. The protein resides in the golgi apparatus. It is found in the trans-Golgi network membrane. The protein localises to the cell membrane. Its function is as follows. Possible role in axon guidance through interaction with RTN4R. (Microbial infection) Acts as a receptor for adeno-associated virus and is involved in adeno-associated virus infection through endocytosis system. The protein is Dyslexia-associated protein KIAA0319-like protein of Mus musculus (Mouse).